Consider the following 147-residue polypeptide: TRAP-T-associated universal stress protein TeaD (147 aa).

Residues 8 to 10, Val-38, 117 to 122, and 131 to 133 contribute to the ATP site; these read PVD, GAQGTN, and SVA.

It belongs to the universal stress protein A family. In terms of assembly, homodimer or homotetramer; in equilibrium. The dimer/tetramer ratio is ATP-dependent. ATP stabilizes dimer-dimer complexes, with one ATP molecule bound to each monomer.

The protein resides in the cytoplasm. ATP-binding protein that negatively regulates activity of the tripartite ATP-independent periplasmic (TRAP) ectoine transport system TeaABC. May regulate uptake according to the ATP status of the cell. The chain is TRAP-T-associated universal stress protein TeaD (teaD) from Halomonas elongata (strain ATCC 33173 / DSM 2581 / NBRC 15536 / NCIMB 2198 / 1H9).